The primary structure comprises 339 residues: Dihydroorotate dehydrogenase (quinone) (339 aa).

FMN-binding positions include 64 to 68 (AGADK) and T88. A substrate-binding site is contributed by K68. 113 to 117 (NRNGF) provides a ligand contact to substrate. FMN is bound by residues N141 and N174. Position 174 (N174) interacts with substrate. S177 serves as the catalytic Nucleophile. Substrate is bound at residue N179. FMN-binding residues include K219 and T247. Residue 248-249 (NT) participates in substrate binding. FMN contacts are provided by residues G270, G299, and 320-321 (YS).

Belongs to the dihydroorotate dehydrogenase family. Type 2 subfamily. In terms of assembly, monomer. FMN is required as a cofactor.

The protein resides in the cell membrane. It carries out the reaction (S)-dihydroorotate + a quinone = orotate + a quinol. The protein operates within pyrimidine metabolism; UMP biosynthesis via de novo pathway; orotate from (S)-dihydroorotate (quinone route): step 1/1. In terms of biological role, catalyzes the conversion of dihydroorotate to orotate with quinone as electron acceptor. The chain is Dihydroorotate dehydrogenase (quinone) from Haemophilus influenzae (strain PittEE).